A 427-amino-acid polypeptide reads, in one-letter code: Trigger factor (427 aa).

Positions 163 to 248 (GDTVILDFEG…LHEIKTKEVP (86 aa)) constitute a PPIase FKBP-type domain.

Belongs to the FKBP-type PPIase family. Tig subfamily.

Its subcellular location is the cytoplasm. It carries out the reaction [protein]-peptidylproline (omega=180) = [protein]-peptidylproline (omega=0). In terms of biological role, involved in protein export. Acts as a chaperone by maintaining the newly synthesized protein in an open conformation. Functions as a peptidyl-prolyl cis-trans isomerase. The protein is Trigger factor of Listeria monocytogenes serotype 4b (strain CLIP80459).